The sequence spans 197 residues: dCTP deaminase (197 aa).

Residue 105–110 (RSSIAR) coordinates dCTP. Catalysis depends on E133, which acts as the Proton donor/acceptor. Residues Y166 and Q177 each contribute to the dCTP site. The disordered stretch occupies residues 172-197 (NKYAGQKDPKPSRLAEELSLEQLRGR). Residues 176 to 187 (GQKDPKPSRLAE) are compositionally biased toward basic and acidic residues.

This sequence belongs to the dCTP deaminase family. Homotrimer.

The catalysed reaction is dCTP + H2O + H(+) = dUTP + NH4(+). Its pathway is pyrimidine metabolism; dUMP biosynthesis; dUMP from dCTP (dUTP route): step 1/2. Its function is as follows. Catalyzes the deamination of dCTP to dUTP. In Thermomicrobium roseum (strain ATCC 27502 / DSM 5159 / P-2), this protein is dCTP deaminase.